The chain runs to 473 residues: Glutamate--tRNA ligase 2 (473 aa).

The short motif at 11-21 (PSPTGYLHIGG) is the 'HIGH' region element. The span at 113–133 (KARAEGRPPRYDGRWRDRDPS) shows a compositional bias: basic and acidic residues. The tract at residues 113–136 (KARAEGRPPRYDGRWRDRDPSEAP) is disordered. A 'KMSKS' region motif is present at residues 240–244 (KLSKR). Lysine 243 contributes to the ATP binding site.

The protein belongs to the class-I aminoacyl-tRNA synthetase family. Glutamate--tRNA ligase type 1 subfamily. Monomer.

Its subcellular location is the cytoplasm. The catalysed reaction is tRNA(Glu) + L-glutamate + ATP = L-glutamyl-tRNA(Glu) + AMP + diphosphate. Its function is as follows. Catalyzes the attachment of glutamate to tRNA(Glu) in a two-step reaction: glutamate is first activated by ATP to form Glu-AMP and then transferred to the acceptor end of tRNA(Glu). The sequence is that of Glutamate--tRNA ligase 2 from Brucella abortus (strain S19).